Reading from the N-terminus, the 327-residue chain is GMP reductase (327 aa).

Cys176 functions as the Thioimidate intermediate in the catalytic mechanism. 205–228 (IIADGGIRTHGDIAKSIRFGASMV) is an NADP(+) binding site.

This sequence belongs to the IMPDH/GMPR family. GuaC type 2 subfamily.

It carries out the reaction IMP + NH4(+) + NADP(+) = GMP + NADPH + 2 H(+). Its function is as follows. Catalyzes the irreversible NADPH-dependent deamination of GMP to IMP. It functions in the conversion of nucleobase, nucleoside and nucleotide derivatives of G to A nucleotides, and in maintaining the intracellular balance of A and G nucleotides. In Streptococcus pyogenes serotype M1, this protein is GMP reductase.